The chain runs to 446 residues: uncharacterized protein (446 aa).

Disordered regions lie at residues 63-95 (KNKP…SDLR) and 155-232 (AESS…HPVK). Over residues 156–169 (ESSVPTPKLTNESN) the composition is skewed to polar residues. 2 stretches are compositionally biased toward basic and acidic residues: residues 182–199 (DQHE…DHSA) and 213–227 (ITKE…EARK).

This is an uncharacterized protein from Mus musculus (Mouse).